The following is a 250-amino-acid chain: Hydroxyethylthiazole kinase (250 aa).

Met-39 contributes to the substrate binding site. ATP is bound by residues Arg-114 and Thr-159. Substrate is bound at residue Gly-186.

This sequence belongs to the Thz kinase family. Mg(2+) serves as cofactor.

The enzyme catalyses 5-(2-hydroxyethyl)-4-methylthiazole + ATP = 4-methyl-5-(2-phosphooxyethyl)-thiazole + ADP + H(+). It participates in cofactor biosynthesis; thiamine diphosphate biosynthesis; 4-methyl-5-(2-phosphoethyl)-thiazole from 5-(2-hydroxyethyl)-4-methylthiazole: step 1/1. Its function is as follows. Catalyzes the phosphorylation of the hydroxyl group of 4-methyl-5-beta-hydroxyethylthiazole (THZ). This Lactococcus lactis subsp. cremoris (strain SK11) protein is Hydroxyethylthiazole kinase.